Consider the following 95-residue polypeptide: Exodeoxyribonuclease 7 small subunit (95 aa).

Residues 65–95 (ETINPAETARPAKPENAPESPRMNDLFGTES) form a disordered region.

It belongs to the XseB family. As to quaternary structure, heterooligomer composed of large and small subunits.

The protein localises to the cytoplasm. The catalysed reaction is Exonucleolytic cleavage in either 5'- to 3'- or 3'- to 5'-direction to yield nucleoside 5'-phosphates.. Its function is as follows. Bidirectionally degrades single-stranded DNA into large acid-insoluble oligonucleotides, which are then degraded further into small acid-soluble oligonucleotides. In Chlorobaculum tepidum (strain ATCC 49652 / DSM 12025 / NBRC 103806 / TLS) (Chlorobium tepidum), this protein is Exodeoxyribonuclease 7 small subunit.